The following is a 324-amino-acid chain: Probable 6-phosphogluconolactonase 4, chloroplastic (324 aa).

A chloroplast-targeting transit peptide spans 1 to 61; that stretch reads MSVSAAVAAA…RAPAMATDCA (61 aa). Residues 20 to 43 form a disordered region; it reads RRRSPPASRVAATSRGRPFSSGPH. A compositionally biased stretch (low complexity) spans 24 to 34; it reads PPASRVAATSR.

It belongs to the glucosamine/galactosamine-6-phosphate isomerase family. 6-phosphogluconolactonase subfamily.

Its subcellular location is the plastid. It is found in the chloroplast. It catalyses the reaction 6-phospho-D-glucono-1,5-lactone + H2O = 6-phospho-D-gluconate + H(+). The protein operates within carbohydrate degradation; pentose phosphate pathway; D-ribulose 5-phosphate from D-glucose 6-phosphate (oxidative stage): step 2/3. Hydrolysis of 6-phosphogluconolactone to 6-phosphogluconate. This Oryza sativa subsp. indica (Rice) protein is Probable 6-phosphogluconolactonase 4, chloroplastic.